A 230-amino-acid chain; its full sequence is Sodium channel modifier 1 (230 aa).

The residue at position 2 (S2) is a Phosphoserine. A Bipartite nuclear localization signal motif is present at residues 4-20; sequence KREGDDWSQLNVLKKRR. A Matrin-type zinc finger spans residues 42–74; that stretch reads FACAICPHRPVLDTLAMLTAHRAGKKHLSSLQL. Residue K67 forms a Glycyl lysine isopeptide (Lys-Gly) (interchain with G-Cter in SUMO2) linkage. Disordered stretches follow at residues 76–106 and 129–191; these read YGKK…EAPL and RRKY…RALD. Residues 89–100 are compositionally biased toward basic and acidic residues; that stretch reads PRQHNELRREET. The span at 142–151 shows a compositional bias: pro residues; sequence SRPPLPPPEV. The segment covering 167–180 has biased composition (polar residues); sequence GSQTKESATVSSPA. 2 positions are modified to phosphoserine: S183 and S219. The required for interaction with LUC7L2 stretch occupies residues 188–230; the sequence is RALDHYLTLRSSGWIPDGRGRWIKDENVEFDSDEEEPPDLPLD.

As to quaternary structure, component of the minor spliceosome. Within this complex, interacts with RNF113A, as well as with SF3B1/SF3b155, SF3B2/SF3b145, SF3B3/SF3b130 and CDC5L. May interact with LUC7L2 and SNRNP70.

Its subcellular location is the nucleus. It localises to the nucleoplasm. The protein localises to the nucleus speckle. Functionally, as a component of the minor spliceosome, involved in the splicing of U12-type introns in pre-mRNAs. Plays a role in the regulation of primary cilia length and Hedgehog signaling. The chain is Sodium channel modifier 1 (SCNM1) from Bos taurus (Bovine).